A 26-amino-acid chain; its full sequence is Omega-conotoxin TVIA (26 aa).

Disulfide bonds link Cys-1/Cys-16, Cys-8/Cys-19, and Cys-15/Cys-26. 4-hydroxyproline occurs at positions 4, 10, and 21.

Belongs to the conotoxin O1 superfamily. In terms of tissue distribution, expressed by the venom duct.

It is found in the secreted. In terms of biological role, omega-conotoxins act at presynaptic membranes, they bind and block voltage-gated calcium channels (Cav). This chain is Omega-conotoxin TVIA, found in Conus tulipa (Fish-hunting cone snail).